Reading from the N-terminus, the 115-residue chain is Large ribosomal subunit protein bL20 (115 aa).

It belongs to the bacterial ribosomal protein bL20 family.

Binds directly to 23S ribosomal RNA and is necessary for the in vitro assembly process of the 50S ribosomal subunit. It is not involved in the protein synthesizing functions of that subunit. This is Large ribosomal subunit protein bL20 from Prochlorococcus marinus (strain AS9601).